The sequence spans 362 residues: DNA replication and repair protein RecF (362 aa).

31 to 38 (GDNAAGKT) is an ATP binding site.

The protein belongs to the RecF family.

It is found in the cytoplasm. Its function is as follows. The RecF protein is involved in DNA metabolism; it is required for DNA replication and normal SOS inducibility. RecF binds preferentially to single-stranded, linear DNA. It also seems to bind ATP. The polypeptide is DNA replication and repair protein RecF (Hydrogenovibrio crunogenus (strain DSM 25203 / XCL-2) (Thiomicrospira crunogena)).